The following is a 390-amino-acid chain: GTPase Obg (390 aa).

The Obg domain maps to 1-159 (MKFVDEATIL…RELTLELLLL (159 aa)). Positions 128–147 (SRFKSSVNRAPRQKTNGTKG) are disordered. Polar residues predominate over residues 129–145 (RFKSSVNRAPRQKTNGT). One can recognise an OBG-type G domain in the interval 160 to 333 (ADVGMLGLPN…LCWDVMNFLK (174 aa)). GTP is bound by residues 166–173 (GLPNAGKS), 191–195 (FTTLV), 213–216 (DIPG), 283–286 (NKVD), and 314–316 (SAA). Mg(2+) is bound by residues Ser-173 and Thr-193.

This sequence belongs to the TRAFAC class OBG-HflX-like GTPase superfamily. OBG GTPase family. As to quaternary structure, monomer. Mg(2+) serves as cofactor.

The protein localises to the cytoplasm. Functionally, an essential GTPase which binds GTP, GDP and possibly (p)ppGpp with moderate affinity, with high nucleotide exchange rates and a fairly low GTP hydrolysis rate. Plays a role in control of the cell cycle, stress response, ribosome biogenesis and in those bacteria that undergo differentiation, in morphogenesis control. In Pectobacterium atrosepticum (strain SCRI 1043 / ATCC BAA-672) (Erwinia carotovora subsp. atroseptica), this protein is GTPase Obg.